Consider the following 124-residue polypeptide: Ribonuclease pancreatic (124 aa).

The segment at 1 to 24 (KESSAMKFQRQHMDSSGSPSTNAN) is disordered. Positions 7 and 10 each coordinate substrate. His-12 acts as the Proton acceptor in catalysis. Positions 14–24 (DSSGSPSTNAN) are enriched in polar residues. Intrachain disulfides connect Cys-26–Cys-84, Cys-40–Cys-95, Cys-58–Cys-110, and Cys-65–Cys-72. Residue Asn-34 is glycosylated (N-linked (GlcNAc...) asparagine). Residues 41-45 (KPVNT), Lys-66, and Arg-85 contribute to the substrate site. Residue His-119 is the Proton donor of the active site.

It belongs to the pancreatic ribonuclease family. Monomer. Interacts with and forms tight 1:1 complexes with RNH1. Dimerization of two such complexes may occur. Interaction with RNH1 inhibits this protein. Pancreas.

Its subcellular location is the secreted. The catalysed reaction is an [RNA] containing cytidine + H2O = an [RNA]-3'-cytidine-3'-phosphate + a 5'-hydroxy-ribonucleotide-3'-[RNA].. It catalyses the reaction an [RNA] containing uridine + H2O = an [RNA]-3'-uridine-3'-phosphate + a 5'-hydroxy-ribonucleotide-3'-[RNA].. In terms of biological role, endonuclease that catalyzes the cleavage of RNA on the 3' side of pyrimidine nucleotides. Acts on single-stranded and double-stranded RNA. This chain is Ribonuclease pancreatic (RNASE1), found in Chinchilla chinchilla (Short-tailed chinchilla).